The primary structure comprises 173 residues: Crossover junction endodeoxyribonuclease RuvC (173 aa).

Residues D8, E67, and D139 contribute to the active site. The Mg(2+) site is built by D8, E67, and D139.

Belongs to the RuvC family. Homodimer which binds Holliday junction (HJ) DNA. The HJ becomes 2-fold symmetrical on binding to RuvC with unstacked arms; it has a different conformation from HJ DNA in complex with RuvA. In the full resolvosome a probable DNA-RuvA(4)-RuvB(12)-RuvC(2) complex forms which resolves the HJ. It depends on Mg(2+) as a cofactor.

It localises to the cytoplasm. The enzyme catalyses Endonucleolytic cleavage at a junction such as a reciprocal single-stranded crossover between two homologous DNA duplexes (Holliday junction).. In terms of biological role, the RuvA-RuvB-RuvC complex processes Holliday junction (HJ) DNA during genetic recombination and DNA repair. Endonuclease that resolves HJ intermediates. Cleaves cruciform DNA by making single-stranded nicks across the HJ at symmetrical positions within the homologous arms, yielding a 5'-phosphate and a 3'-hydroxyl group; requires a central core of homology in the junction. The consensus cleavage sequence is 5'-(A/T)TT(C/G)-3'. Cleavage occurs on the 3'-side of the TT dinucleotide at the point of strand exchange. HJ branch migration catalyzed by RuvA-RuvB allows RuvC to scan DNA until it finds its consensus sequence, where it cleaves and resolves the cruciform DNA. In Shewanella piezotolerans (strain WP3 / JCM 13877), this protein is Crossover junction endodeoxyribonuclease RuvC.